Here is a 240-residue protein sequence, read N- to C-terminus: Probable ATP synthase 24 kDa subunit, mitochondrial (240 aa).

Residues 1 to 32 constitute a mitochondrion transit peptide; the sequence is MAYASRFLSRSKQLQGGLVILQQQHAIPVRAF. Composition is skewed to basic and acidic residues over residues 210–222 and 229–240; these read AVEA…KKEE and PDVKSLDIRNFI. The disordered stretch occupies residues 210 to 240; sequence AVEAMESQKKKEEFQDEEMPDVKSLDIRNFI.

The protein localises to the mitochondrion. It localises to the mitochondrion inner membrane. Functionally, mitochondrial membrane ATP synthase (F(1)F(0) ATP synthase or Complex V) produces ATP from ADP in the presence of a proton gradient across the membrane which is generated by electron transport complexes of the respiratory chain. F-type ATPases consist of two structural domains, F(1) - containing the extramembraneous catalytic core and F(0) - containing the membrane proton channel, linked together by a central stalk and a peripheral stalk. During catalysis, ATP synthesis in the catalytic domain of F(1) is coupled via a rotary mechanism of the central stalk subunits to proton translocation. Part of the complex F(0) domain. The chain is Probable ATP synthase 24 kDa subunit, mitochondrial from Arabidopsis thaliana (Mouse-ear cress).